Here is a 325-residue protein sequence, read N- to C-terminus: Aminotransferase tasG (325 aa).

Gly-35 provides a ligand contact to substrate. Pyridoxal 5'-phosphate is bound by residues Thr-89 to Trp-90, Asn-143, Tyr-174, and Ser-203 to Ala-205. Asn-143 provides a ligand contact to substrate. At Lys-206 the chain carries N6-(pyridoxal phosphate)lysine. A pyridoxal 5'-phosphate-binding site is contributed by Arg-214.

It belongs to the class-I pyridoxal-phosphate-dependent aminotransferase family. In terms of assembly, homodimer. Requires pyridoxal 5'-phosphate as cofactor.

It participates in secondary metabolite biosynthesis. Functionally, aminotransferase; part of the gene cluster that mediates the biosynthesis of the tetramic acids Sch210971 and Sch210972, potential anti-HIV fungal natural product that contain a decalin core. The PKS module of tasS together with the enoylreductase tasC catalyze the formation of the polyketide unit which is then conjugated to 4-hydroxyl-4-methyl glutamate (HMG) by the condensation domain of the tasS NRPS module. One unique structural feature of Sch210971 and Sch210972 is the tetramic acid motif proposed to be derived from the non-proteinogenic amino acid HMG, by a Dieckmann-type condensation catalyzed by the reductase domain of tasS. The aldolase tasA catalyzes the aldol condensation of 2 molecules of pyruvic acid to yield the intermediate 4-hydroxyl-4-methyl-2-oxoglutarate (HMOG), which can then be stereoselectively transaminated, may be by tasG, to form HMG. The Diels-Alderase tas3 then uses the Dieckmann product of tasS as substrate and catalyzes the Diels-Alder cycloaddition to form the decalin ring of Sch210971 and Sch210972. This is Aminotransferase tasG from Hapsidospora irregularis.